A 124-amino-acid chain; its full sequence is MSTLYEKLGGTTAVDLAVDKFYERVLQDDRIKHFFADVDMAKQRAHQKAFLTYAFGGTDKYDGRYMREAHKELVENHGLNGEHFDAVAEDLLATLKEMGVPEDLIAEVAAVAGAPAHKRDVLNQ.

Heme-binding residues include histidine 46, histidine 70, and histidine 117.

The protein belongs to the truncated hemoglobin family. Group I subfamily. Monomer. Heme serves as cofactor.

Functionally, forms a very stable complex with oxygen. The oxygen dissociation rate is 0.011 sec(-1). This Synechocystis sp. (strain ATCC 27184 / PCC 6803 / Kazusa) protein is Group 1 truncated hemoglobin GlbN (glbN).